Reading from the N-terminus, the 149-residue chain is UPF0756 membrane protein Nther_1957 (149 aa).

The next 4 membrane-spanning stretches (helical) occupy residues 5–25 (IVVLLFIFLIALIGKNDLVAT), 52–72 (LGILLLTLSVLTPFAAGDIMP), 85–105 (LIAVFSGIVASYLTGHGVELL), and 111–131 (VMVGLIVGSIIGASFLKGVPA).

The protein belongs to the UPF0756 family.

The protein resides in the cell membrane. The chain is UPF0756 membrane protein Nther_1957 from Natranaerobius thermophilus (strain ATCC BAA-1301 / DSM 18059 / JW/NM-WN-LF).